A 159-amino-acid chain; its full sequence is Sec-independent protein translocase protein TatB (159 aa).

The helical transmembrane segment at 1–21 (MIDIGLSKMALIGAVALIVIG) threads the bilayer.

The protein belongs to the TatB family. The Tat system comprises two distinct complexes: a TatABC complex, containing multiple copies of TatA, TatB and TatC subunits, and a separate TatA complex, containing only TatA subunits. Substrates initially bind to the TatABC complex, which probably triggers association of the separate TatA complex to form the active translocon.

Its subcellular location is the cell inner membrane. Its function is as follows. Part of the twin-arginine translocation (Tat) system that transports large folded proteins containing a characteristic twin-arginine motif in their signal peptide across membranes. Together with TatC, TatB is part of a receptor directly interacting with Tat signal peptides. TatB may form an oligomeric binding site that transiently accommodates folded Tat precursor proteins before their translocation. This is Sec-independent protein translocase protein TatB from Acidovorax sp. (strain JS42).